A 270-amino-acid polypeptide reads, in one-letter code: Flagellar hook-basal body complex protein FlhO (270 aa).

This sequence belongs to the flagella basal body rod proteins family.

Not required for motility. The sequence is that of Flagellar hook-basal body complex protein FlhO (flhO) from Bacillus subtilis (strain 168).